The sequence spans 336 residues: Glycerol-3-phosphate dehydrogenase [NAD(P)+] (336 aa).

NADPH is bound by residues Trp-16 and Lys-109. The sn-glycerol 3-phosphate site is built by Lys-109, Gly-137, and Ser-139. An NADPH-binding site is contributed by Ala-141. Residues Lys-192, Asp-245, Ser-255, Arg-256, and Asn-257 each contribute to the sn-glycerol 3-phosphate site. Catalysis depends on Lys-192, which acts as the Proton acceptor. An NADPH-binding site is contributed by Arg-256. The NADPH site is built by Val-280 and Glu-282.

It belongs to the NAD-dependent glycerol-3-phosphate dehydrogenase family.

The protein resides in the cytoplasm. It catalyses the reaction sn-glycerol 3-phosphate + NAD(+) = dihydroxyacetone phosphate + NADH + H(+). The catalysed reaction is sn-glycerol 3-phosphate + NADP(+) = dihydroxyacetone phosphate + NADPH + H(+). The protein operates within membrane lipid metabolism; glycerophospholipid metabolism. In terms of biological role, catalyzes the reduction of the glycolytic intermediate dihydroxyacetone phosphate (DHAP) to sn-glycerol 3-phosphate (G3P), the key precursor for phospholipid synthesis. The protein is Glycerol-3-phosphate dehydrogenase [NAD(P)+] of Hyphomonas neptunium (strain ATCC 15444).